A 144-amino-acid chain; its full sequence is D-aminoacyl-tRNA deacylase (144 aa).

A Gly-cisPro motif, important for rejection of L-amino acids motif is present at residues 136 to 137 (GP).

The protein belongs to the DTD family. Homodimer.

The protein localises to the cytoplasm. It catalyses the reaction glycyl-tRNA(Ala) + H2O = tRNA(Ala) + glycine + H(+). It carries out the reaction a D-aminoacyl-tRNA + H2O = a tRNA + a D-alpha-amino acid + H(+). Functionally, an aminoacyl-tRNA editing enzyme that deacylates mischarged D-aminoacyl-tRNAs. Also deacylates mischarged glycyl-tRNA(Ala), protecting cells against glycine mischarging by AlaRS. Acts via tRNA-based rather than protein-based catalysis; rejects L-amino acids rather than detecting D-amino acids in the active site. By recycling D-aminoacyl-tRNA to D-amino acids and free tRNA molecules, this enzyme counteracts the toxicity associated with the formation of D-aminoacyl-tRNA entities in vivo and helps enforce protein L-homochirality. This chain is D-aminoacyl-tRNA deacylase, found in Haemophilus ducreyi (strain 35000HP / ATCC 700724).